The sequence spans 642 residues: Threonine--tRNA ligase (642 aa).

A TGS domain is found at 1–61; the sequence is MPIITLPDGS…EEDASLEIIT (61 aa). Residues 244–535 form a catalytic region; it reads DHRKIGKQLD…LIEEYAGFFP (292 aa). Cysteine 335, histidine 386, and histidine 512 together coordinate Zn(2+).

The protein belongs to the class-II aminoacyl-tRNA synthetase family. Homodimer. Zn(2+) is required as a cofactor.

It localises to the cytoplasm. It catalyses the reaction tRNA(Thr) + L-threonine + ATP = L-threonyl-tRNA(Thr) + AMP + diphosphate + H(+). In terms of biological role, catalyzes the attachment of threonine to tRNA(Thr) in a two-step reaction: L-threonine is first activated by ATP to form Thr-AMP and then transferred to the acceptor end of tRNA(Thr). Also edits incorrectly charged L-seryl-tRNA(Thr). This Vibrio vulnificus (strain CMCP6) protein is Threonine--tRNA ligase.